Reading from the N-terminus, the 384-residue chain is Substance-K receptor (384 aa).

Over 1–32 (MGGRAIVTDTNIFSGLESNTTGVTAFSMPAWQ) the chain is Extracellular. An N-linked (GlcNAc...) asparagine glycan is attached at asparagine 19. Residues 33-56 (LALWATAYLGLVLVAVTGNATVIW) traverse the membrane as a helical segment. The Cytoplasmic portion of the chain corresponds to 57 to 69 (IILAHERMRTVTN). The helical transmembrane segment at 70 to 90 (YFIINLALADLCMAAFNATFN) threads the bilayer. The Extracellular portion of the chain corresponds to 91-107 (FVYASHNIWYFGRAFCY). Cysteine 106 and cysteine 181 are joined by a disulfide. A helical transmembrane segment spans residues 108–129 (FQNLFPITAMFVSIYSMTAIAA). Topologically, residues 130 to 149 (DRYMAIVHPFQPRLSAPITK) are cytoplasmic. Residues 150 to 170 (ATIAGIWLVALALASPQCFYS) form a helical membrane-spanning segment. At 171 to 196 (TITVDQGATKCVVAWPNDNGGKMLLL) the chain is on the extracellular side. A helical membrane pass occupies residues 197–218 (YHLVVFVLVYFLPLVVMFVAYS). Residues 219–251 (VIGLTLWKRAVPRHQAHGANLRHLHAKKKFVKA) are Cytoplasmic-facing. Residues 252–272 (MVLVVLTFAICWLPYHLYFIL) traverse the membrane as a helical segment. Residues 273–290 (GSFQKDIYYRKFIQQVYL) lie on the Extracellular side of the membrane. The helical transmembrane segment at 291-310 (ALFWLAMSSTMYNPIIYCCL) threads the bilayer. The Cytoplasmic portion of the chain corresponds to 311 to 384 (NHRFRSGFRL…SPQDVEPAAP (74 aa)). The S-palmitoyl cysteine moiety is linked to residue cysteine 324.

It belongs to the G-protein coupled receptor 1 family.

It localises to the cell membrane. This is a receptor for the tachykinin neuropeptide substance K (neurokinin A). It is associated with G proteins that activate a phosphatidylinositol-calcium second messenger system. The rank order of affinity of this receptor to tachykinins is: substance K &gt; neuromedin-K &gt; substance P. The sequence is that of Substance-K receptor (TACR2) from Mesocricetus auratus (Golden hamster).